A 152-amino-acid polypeptide reads, in one-letter code: MALDKSVILLPLLVLVLLVLGCLGRESRAKKFQRQHMDSGSSPSSNSTYCNQMMKRRSMTQGRCKPVNTFVHEPLVDVQNVCFQEKVTCKNGQTNCFKSKSSMHITDCRLTNGSRYPNCAYRTSPKERRIIVACEGSPYVPVHFDASVEDST.

The N-terminal stretch at methionine 1–glycine 24 is a signal peptide. Substrate is bound by residues lysine 31 and arginine 34. Residue histidine 36 is the Proton acceptor of the active site. Asparagine 46 is a glycosylation site (N-linked (GlcNAc...) asparagine). 4 disulfides stabilise this stretch: cysteine 50–cysteine 108, cysteine 64–cysteine 119, cysteine 82–cysteine 134, and cysteine 89–cysteine 96. Substrate-binding positions include lysine 65–threonine 69, lysine 90, and arginine 109. Asparagine 112 carries an N-linked (GlcNAc...) asparagine glycan. The active-site Proton donor is the histidine 143.

Belongs to the pancreatic ribonuclease family. In terms of assembly, monomer. Interacts with and forms tight 1:1 complexes with RNH1. Dimerization of two such complexes may occur. Interaction with RNH1 inhibits this protein.

The protein localises to the secreted. The catalysed reaction is an [RNA] containing cytidine + H2O = an [RNA]-3'-cytidine-3'-phosphate + a 5'-hydroxy-ribonucleotide-3'-[RNA].. It catalyses the reaction an [RNA] containing uridine + H2O = an [RNA]-3'-uridine-3'-phosphate + a 5'-hydroxy-ribonucleotide-3'-[RNA].. Its function is as follows. Endonuclease that catalyzes the cleavage of RNA on the 3' side of pyrimidine nucleotides. Acts on single-stranded and double-stranded RNA. The protein is Ribonuclease pancreatic (RNASE1) of Miopithecus talapoin (Angolan talapoin).